The chain runs to 414 residues: tRNA dimethylallyltransferase (414 aa).

33-40 (APTASGKT) provides a ligand contact to ATP. 35 to 40 (TASGKT) serves as a coordination point for substrate. Interaction with substrate tRNA regions lie at residues 58 to 61 (DSAL), 182 to 186 (QRITR), and 266 to 271 (RCVGYR).

The protein belongs to the IPP transferase family. As to quaternary structure, monomer. It depends on Mg(2+) as a cofactor.

The catalysed reaction is adenosine(37) in tRNA + dimethylallyl diphosphate = N(6)-dimethylallyladenosine(37) in tRNA + diphosphate. Catalyzes the transfer of a dimethylallyl group onto the adenine at position 37 in tRNAs that read codons beginning with uridine, leading to the formation of N6-(dimethylallyl)adenosine (i(6)A). This is tRNA dimethylallyltransferase from Psychrobacter arcticus (strain DSM 17307 / VKM B-2377 / 273-4).